A 132-amino-acid chain; its full sequence is Small ribosomal subunit protein uS8 (132 aa).

The protein belongs to the universal ribosomal protein uS8 family. As to quaternary structure, part of the 30S ribosomal subunit. Contacts proteins S5 and S12.

Functionally, one of the primary rRNA binding proteins, it binds directly to 16S rRNA central domain where it helps coordinate assembly of the platform of the 30S subunit. The chain is Small ribosomal subunit protein uS8 from Streptococcus pneumoniae (strain Taiwan19F-14).